The sequence spans 257 residues: ATP synthase subunit a (257 aa).

The propeptide at 1–8 is removed in mature form; it reads MRHLDFVL. The next 7 helical transmembrane spans lie at 34-54, 93-113, 122-142, 149-169, 187-207, 210-230, and 231-251; these read LTNIGLYLTISIFLILTYSLL, FFPLMYVLFIFILVNNLIGLV, HFILTFSISFTVVLGATILGF, FFSLFVPSGCPLALLPLLVLI, ANILSGHMLLSILSGFTYNIM, GIIFFILGLIPLAFIIAFSGL, and ELAIAFIQAQVFVVLACSYIK.

This sequence belongs to the ATPase A chain family. As to quaternary structure, F-type ATPases have 2 components, CF(1) - the catalytic core - and CF(0) - the membrane proton channel. CF(1) has five subunits: alpha(3), beta(3), gamma(1), delta(1), epsilon(1). CF(0) has three main subunits: a, b and c.

It localises to the mitochondrion inner membrane. Its function is as follows. Mitochondrial membrane ATP synthase (F(1)F(0) ATP synthase or Complex V) produces ATP from ADP in the presence of a proton gradient across the membrane which is generated by electron transport complexes of the respiratory chain. F-type ATPases consist of two structural domains, F(1) - containing the extramembraneous catalytic core and F(0) - containing the membrane proton channel, linked together by a central stalk and a peripheral stalk. During catalysis, ATP synthesis in the catalytic domain of F(1) is coupled via a rotary mechanism of the central stalk subunits to proton translocation. Key component of the proton channel; it may play a direct role in the translocation of protons across the membrane. The sequence is that of ATP synthase subunit a (atp6) from Penicillium chrysogenum (Penicillium notatum).